Reading from the N-terminus, the 203-residue chain is Membrane-spanning 4-domains subfamily A member 13 (203 aa).

The next 4 helical transmembrane spans lie at 15–35 (VLGV…YFLL), 56–76 (MGTS…VKAA), 84–104 (ILCT…AASL), and 141–161 (FAIA…SSIV).

It belongs to the MS4A family.

The protein localises to the membrane. In terms of biological role, may be involved in signal transduction as a component of a multimeric receptor complex. The polypeptide is Membrane-spanning 4-domains subfamily A member 13 (Ms4a13) (Mus musculus (Mouse)).